The chain runs to 128 residues: DNA-directed RNA polymerase subunit omega (128 aa).

Belongs to the RNA polymerase subunit omega family. As to quaternary structure, the RNAP catalytic core consists of 2 alpha, 1 beta, 1 beta' and 1 omega subunit. When a sigma factor is associated with the core the holoenzyme is formed, which can initiate transcription.

It catalyses the reaction RNA(n) + a ribonucleoside 5'-triphosphate = RNA(n+1) + diphosphate. Promotes RNA polymerase assembly. Latches the N- and C-terminal regions of the beta' subunit thereby facilitating its interaction with the beta and alpha subunits. This Neorickettsia sennetsu (strain ATCC VR-367 / Miyayama) (Ehrlichia sennetsu) protein is DNA-directed RNA polymerase subunit omega.